We begin with the raw amino-acid sequence, 613 residues long: Ribosome-associated molecular chaperone SSB1 (613 aa).

Residues 1–391 form a nucleotide binding domain (NBD) region; that stretch reads MAEGVFQGAI…ILTGQSTSED (391 aa). ATP-binding positions include 16–18, lysine 73, 205–207, 271–278, and glycine 342; these read TTY, GGT, and ERAKRTLS. Residues 392-402 form an inter-domain linker region; the sequence is TKDLLLLDVAP. A substrate binding domain (SBD) region spans residues 403-613; sequence LSLGVGMQGD…RVVTKAMSSR (211 aa). Positions 516-612 are lid domain (SBDalpha); it reads SDEIEKMVNQ…KRVVTKAMSS (97 aa). Residues 574–582 carry the Nuclear export signal motif; that stretch reads IESALSDAL.

Belongs to the heat shock protein 70 family. Ssb-type Hsp70 subfamily. Binds to ribosomes. Binds close to the ribosomal tunnel exit via contacts with both ribosomal proteins and rRNA. Directly interacts with nascent polypeptides. This interaction is dependent on the ribosome-associated complex (RAC). Interacts with SSE1. Interacts with FES1.

It localises to the cytoplasm. The enzyme catalyses ATP + H2O = ADP + phosphate + H(+). Its function is as follows. Ribosome-bound, Hsp70-type chaperone that assists in the cotranslational folding of newly synthesized proteins in the cytosol. Stimulates folding by interacting with nascent chains, binding to short, largely hydrophobic sequences exposed by unfolded proteins, thereby stabilizing longer, more slowly translated, and aggregation-prone nascent polypeptides and domains that cannot fold stably until fully synthesized. The Hsp70-protein substrate interaction depends on ATP-binding and on allosteric regulation between the NBD and the SBD. The ATP-bound state is characterized by a fast exchange rate of substrate (low affinity state), while in the ADP-bound state exchange is much slower (high affinity state). During the Hsp70 cycle, the chaperone switches between the ATP-bound state (open conformation) and the ADP-bound state (closed conformation) by major conformational rearrangements involving mainly the lid domain. Ssb cooperates with a specific Hsp40/Hsp70 co-chaperone termed the ribosome-associated complex (RAC), which stimulates the ATPase activity of the ribosome-associated pool of Ssbs and switches it to the high affinity substrate binding state. Hsp110 chaperone SSE1 and FES1 act as nucleotide exchange factors that cause substrate release. The protein is Ribosome-associated molecular chaperone SSB1 (SSB1) of Zygosaccharomyces rouxii (strain ATCC 2623 / CBS 732 / NBRC 1130 / NCYC 568 / NRRL Y-229).